The chain runs to 444 residues: Phosphoglucosamine mutase (444 aa).

Catalysis depends on Ser-99, which acts as the Phosphoserine intermediate. Mg(2+) contacts are provided by Ser-99, Asp-242, Asp-244, and Asp-246. At Ser-99 the chain carries Phosphoserine.

This sequence belongs to the phosphohexose mutase family. Mg(2+) is required as a cofactor. Activated by phosphorylation.

The enzyme catalyses alpha-D-glucosamine 1-phosphate = D-glucosamine 6-phosphate. Functionally, catalyzes the conversion of glucosamine-6-phosphate to glucosamine-1-phosphate. This Aliarcobacter butzleri (strain RM4018) (Arcobacter butzleri) protein is Phosphoglucosamine mutase.